The primary structure comprises 280 residues: Elongation factor 1-delta (280 aa).

Ala2 bears the N-acetylalanine mark. Lys17 carries the post-translational modification N6-acetyllysine. Ser37, Ser44, Ser60, Ser86, and Ser106 each carry phosphoserine. Lys107 bears the N6-acetyllysine mark. The segment at 113–171 (SALEKSSPAHRATTPQTQHVSPMRQVEPPSRKAATATEDDEDDDIDLFGSDEEEDKEAT) is disordered. An N6-acetyllysine; alternate modification is found at Lys117. The residue at position 117 (Lys117) is an N6-succinyllysine; alternate. Ser119 is subject to Phosphoserine. At Thr129 the chain carries Phosphothreonine. Phosphoserine is present on Ser133. Position 147 is a phosphothreonine (Thr147). The segment covering 149 to 168 (TEDDEDDDIDLFGSDEEEDK) has biased composition (acidic residues). Ser162 carries the phosphoserine; by CK2 modification.

It belongs to the EF-1-beta/EF-1-delta family. EF-1 is composed of 4 subunits: alpha, beta, delta, and gamma.

EF-1-beta and EF-1-delta stimulate the exchange of GDP bound to EF-1-alpha to GTP. This chain is Elongation factor 1-delta (EEF1D), found in Bos taurus (Bovine).